Reading from the N-terminus, the 268-residue chain is Probable chemotaxis protein methyltransferase (268 aa).

The CheR-type methyltransferase domain maps to 1 to 262 (MIYSDAGIFL…GITTYRYTTK (262 aa)). S-adenosyl-L-methionine is bound by residues N60, T62, R66, E104, D130, 188-189 (NL), and 205-206 (RN).

The catalysed reaction is L-glutamyl-[protein] + S-adenosyl-L-methionine = [protein]-L-glutamate 5-O-methyl ester + S-adenosyl-L-homocysteine. Methylation of the membrane-bound methyl-accepting chemotaxis proteins (MCP) to form gamma-glutamyl methyl ester residues in MCP. This chain is Probable chemotaxis protein methyltransferase (cheRch1), found in Rhizobium etli (strain ATCC 51251 / DSM 11541 / JCM 21823 / NBRC 15573 / CFN 42).